Reading from the N-terminus, the 469-residue chain is Dihydrolipoyl dehydrogenase (469 aa).

Residues 40–48 (EKAVLGGVC), K57, and A120 contribute to the FAD site. A disulfide bridge links C48 with C53. Residues 186–190 (GGGAI), E209, and 275–278 (AVGV) contribute to the NAD(+) site. Residues D317 and A325 each coordinate FAD. Catalysis depends on H450, which acts as the Proton acceptor.

Belongs to the class-I pyridine nucleotide-disulfide oxidoreductase family. As to quaternary structure, homodimer. FAD is required as a cofactor.

It is found in the cytoplasm. The enzyme catalyses N(6)-[(R)-dihydrolipoyl]-L-lysyl-[protein] + NAD(+) = N(6)-[(R)-lipoyl]-L-lysyl-[protein] + NADH + H(+). In terms of biological role, lipoamide dehydrogenase is a component of the alpha-ketoacid dehydrogenase complexes. The chain is Dihydrolipoyl dehydrogenase (lpd) from Chlorobaculum tepidum (strain ATCC 49652 / DSM 12025 / NBRC 103806 / TLS) (Chlorobium tepidum).